The chain runs to 450 residues: Phosphoglucosamine mutase (450 aa).

Residue Ser-101 is the Phosphoserine intermediate of the active site. 4 residues coordinate Mg(2+): Ser-101, Asp-242, Asp-244, and Asp-246. Ser-101 carries the post-translational modification Phosphoserine.

This sequence belongs to the phosphohexose mutase family. The cofactor is Mg(2+). In terms of processing, activated by phosphorylation.

The catalysed reaction is alpha-D-glucosamine 1-phosphate = D-glucosamine 6-phosphate. Catalyzes the conversion of glucosamine-6-phosphate to glucosamine-1-phosphate. This chain is Phosphoglucosamine mutase, found in Rhodopseudomonas palustris (strain BisA53).